A 948-amino-acid polypeptide reads, in one-letter code: ATPase 8, plasma membrane-type (948 aa).

The Cytoplasmic segment spans residues 1–64; it reads MATEFSWDEI…EKSENKFLKF (64 aa). The chain crosses the membrane as a helical span at residues 65–84; it reads LGFMWNPLSWVMESAAIMAI. At 85 to 96 the chain is on the extracellular side; the sequence is VLANGGGKAPDW. Residues 97–117 form a helical membrane-spanning segment; sequence QDFIGIMVLLIINSTISFIEE. Residues 118–246 lie on the Cytoplasmic side of the membrane; that stretch reads NNAGNAAAAL…GHFQKVLTSI (129 aa). A helical transmembrane segment spans residues 247–267; sequence GNFCICSIGLGMLIEILIMYP. Residues 268-276 lie on the Extracellular side of the membrane; that stretch reads IQHRTYRDG. A helical membrane pass occupies residues 277-294; sequence IDNLLVLLIGGIPIAMPT. The Cytoplasmic portion of the chain corresponds to 295 to 646; sequence VLSVTMAIGS…TSRAIFQRMK (352 aa). Asp-332 functions as the 4-aspartylphosphate intermediate in the catalytic mechanism. 2 residues coordinate Mg(2+): Asp-591 and Asp-595. Residues 647–668 traverse the membrane as a helical segment; it reads NYTIYAVSITIRIVLGFMLVAL. The Extracellular segment spans residues 669 to 673; it reads IWRFD. A helical transmembrane segment spans residues 674–696; it reads FAPFMVLIIAILNDGTIMTISKD. Topologically, residues 697 to 712 are cytoplasmic; sequence RVKPSPVPDSWKLNEI. The helical transmembrane segment at 713–733 threads the bilayer; the sequence is FATGVVLGTYMALTTVLFFWL. At 734–754 the chain is on the extracellular side; it reads AHDTDFFSKTFGVRSIQGNEE. Residues 755-775 form a helical membrane-spanning segment; sequence ELMAALYLQVSIISQALIFVT. The Cytoplasmic portion of the chain corresponds to 776-787; the sequence is RSRSWSFVERPG. The helical transmembrane segment at 788–808 threads the bilayer; the sequence is FLLLIAFVIAQLVATLIAVYA. Residues 809–816 lie on the Extracellular side of the membrane; that stretch reads NWGFARIV. The helical transmembrane segment at 817 to 837 threads the bilayer; the sequence is GCGWGWAGGIWVYSIITYIPL. Topologically, residues 838-948 are cytoplasmic; sequence DILKFIIRYA…IDTIQQHYTV (111 aa). A Phosphothreonine modification is found at Thr-884. Ser-930 is subject to Phosphoserine. Residues 946 to 948 form an interaction with 14-3-3 proteins region; sequence YTV. Thr-947 carries the phosphothreonine modification.

This sequence belongs to the cation transport ATPase (P-type) (TC 3.A.3) family. Type IIIA subfamily. As to quaternary structure, binds to 14-3-3 proteins. The binding is induced by phosphorylation of Thr-947. Binding to 14-3-3 proteins activates the H(+)-ATPase. Expressed in guard cells, roots and leaves, and barely in mesophyll cells.

The protein localises to the membrane. The enzyme catalyses ATP + H2O + H(+)(in) = ADP + phosphate + 2 H(+)(out). In terms of biological role, the plasma membrane H(+) ATPase of plants and fungi generates a proton gradient that drives the active transport of nutrients by H(+)-symport. The resulting external acidification and/or internal alkinization may mediate growth responses. The polypeptide is ATPase 8, plasma membrane-type (AHA8) (Arabidopsis thaliana (Mouse-ear cress)).